Reading from the N-terminus, the 503-residue chain is ATP synthase subunit alpha (503 aa).

An ATP-binding site is contributed by 170 to 177 (GDRQTGKT).

It belongs to the ATPase alpha/beta chains family. As to quaternary structure, F-type ATPases have 2 components, CF(1) - the catalytic core - and CF(0) - the membrane proton channel. CF(1) has five subunits: alpha(3), beta(3), gamma(1), delta(1), epsilon(1). CF(0) has three main subunits: a(1), b(2) and c(9-12). The alpha and beta chains form an alternating ring which encloses part of the gamma chain. CF(1) is attached to CF(0) by a central stalk formed by the gamma and epsilon chains, while a peripheral stalk is formed by the delta and b chains.

It is found in the cell inner membrane. It carries out the reaction ATP + H2O + 4 H(+)(in) = ADP + phosphate + 5 H(+)(out). Produces ATP from ADP in the presence of a proton gradient across the membrane. The alpha chain is a regulatory subunit. This chain is ATP synthase subunit alpha, found in Thermotoga maritima (strain ATCC 43589 / DSM 3109 / JCM 10099 / NBRC 100826 / MSB8).